A 137-amino-acid chain; its full sequence is Lysozyme (137 aa).

Positions 1–18 are cleaved as a signal peptide; sequence MQKLIIFALVVLCVGSEA. The 119-residue stretch at 19 to 137 folds into the C-type lysozyme domain; sequence KTFTRCGLVH…QGSLPDISSC (119 aa). Disulfide bonds link cysteine 24–cysteine 137, cysteine 45–cysteine 127, cysteine 79–cysteine 93, and cysteine 89–cysteine 107. Residues glutamate 50 and aspartate 67 contribute to the active site.

The protein belongs to the glycosyl hydrolase 22 family.

It carries out the reaction Hydrolysis of (1-&gt;4)-beta-linkages between N-acetylmuramic acid and N-acetyl-D-glucosamine residues in a peptidoglycan and between N-acetyl-D-glucosamine residues in chitodextrins.. Functionally, lysozymes have primarily a bacteriolytic function; those in tissues and body fluids are associated with the monocyte-macrophage system and enhance the activity of immunoagents. Active against E.coli and M.luteus. In Bombyx mori (Silk moth), this protein is Lysozyme.